The sequence spans 179 residues: Replication restart protein DnaT (179 aa).

The interval 1–83 (MSSRILTSHF…FEEPAAAPVA (83 aa)) is required for trimerization and to bind PriB. A binds ssDNA region spans residues 84–179 (VPMGKFAMYA…DSHIPRGFRG (96 aa)). The interval 151 to 179 (SRASNGGQPKRDVNSVSEPDSHIPRGFRG) is disordered. Positions 159-173 (PKRDVNSVSEPDSHI) are enriched in basic and acidic residues.

Belongs to the DnaT family. In terms of assembly, homotrimer. Interacts with PriB. Interacts with PriC. Component of the replication restart primosome. Primosome assembly occurs via a 'hand-off' mechanism. PriA binds to replication forks, subsequently PriB then DnaT bind; DnaT then displaces ssDNA to generate the helicase loading substrate.

Involved in the restart of stalled replication forks, which reloads the replicative helicase on sites other than the origin of replication. Can function in multiple replication restart pathways. Displaces ssDNA from a PriB-ssDNA complex. Probably forms a spiral filament on ssDNA. In terms of biological role, binds single-stranded (ss)DNA. The minimal binding site is about 26 +/- 2 nucleotides (nt) per trimer. Two DNA-protein complexes are seen with 55 nt-long ssDNA. In Klebsiella pneumoniae subsp. pneumoniae (strain ATCC 700721 / MGH 78578), this protein is Replication restart protein DnaT.